Here is a 656-residue protein sequence, read N- to C-terminus: Threonine--tRNA ligase (656 aa).

The 63-residue stretch at 1–63 (MAEIQLTFPD…LEDGAIEIIT (63 aa)) folds into the TGS domain. The catalytic stretch occupies residues 243-541 (DHRVIGNQLD…LTEIYKGAFP (299 aa)). 3 residues coordinate Zn(2+): Cys-337, His-388, and His-518.

It belongs to the class-II aminoacyl-tRNA synthetase family. Homodimer. Zn(2+) serves as cofactor.

The protein localises to the cytoplasm. It catalyses the reaction tRNA(Thr) + L-threonine + ATP = L-threonyl-tRNA(Thr) + AMP + diphosphate + H(+). Catalyzes the attachment of threonine to tRNA(Thr) in a two-step reaction: L-threonine is first activated by ATP to form Thr-AMP and then transferred to the acceptor end of tRNA(Thr). Also edits incorrectly charged L-seryl-tRNA(Thr). This chain is Threonine--tRNA ligase, found in Latilactobacillus sakei subsp. sakei (strain 23K) (Lactobacillus sakei subsp. sakei).